Here is a 216-residue protein sequence, read N- to C-terminus: ATP phosphoribosyltransferase (216 aa).

Belongs to the ATP phosphoribosyltransferase family. Short subfamily. In terms of assembly, heteromultimer composed of HisG and HisZ subunits.

Its subcellular location is the cytoplasm. It carries out the reaction 1-(5-phospho-beta-D-ribosyl)-ATP + diphosphate = 5-phospho-alpha-D-ribose 1-diphosphate + ATP. It functions in the pathway amino-acid biosynthesis; L-histidine biosynthesis; L-histidine from 5-phospho-alpha-D-ribose 1-diphosphate: step 1/9. In terms of biological role, catalyzes the condensation of ATP and 5-phosphoribose 1-diphosphate to form N'-(5'-phosphoribosyl)-ATP (PR-ATP). Has a crucial role in the pathway because the rate of histidine biosynthesis seems to be controlled primarily by regulation of HisG enzymatic activity. The sequence is that of ATP phosphoribosyltransferase from Thiobacillus denitrificans (strain ATCC 25259 / T1).